Reading from the N-terminus, the 236-residue chain is Biosynthetic peptidoglycan transglycosylase (236 aa).

A helical membrane pass occupies residues Ala-12 to Pro-31.

The protein belongs to the glycosyltransferase 51 family.

It is found in the cell inner membrane. It catalyses the reaction [GlcNAc-(1-&gt;4)-Mur2Ac(oyl-L-Ala-gamma-D-Glu-L-Lys-D-Ala-D-Ala)](n)-di-trans,octa-cis-undecaprenyl diphosphate + beta-D-GlcNAc-(1-&gt;4)-Mur2Ac(oyl-L-Ala-gamma-D-Glu-L-Lys-D-Ala-D-Ala)-di-trans,octa-cis-undecaprenyl diphosphate = [GlcNAc-(1-&gt;4)-Mur2Ac(oyl-L-Ala-gamma-D-Glu-L-Lys-D-Ala-D-Ala)](n+1)-di-trans,octa-cis-undecaprenyl diphosphate + di-trans,octa-cis-undecaprenyl diphosphate + H(+). The protein operates within cell wall biogenesis; peptidoglycan biosynthesis. Its function is as follows. Peptidoglycan polymerase that catalyzes glycan chain elongation from lipid-linked precursors. The polypeptide is Biosynthetic peptidoglycan transglycosylase (Pseudomonas putida (strain ATCC 700007 / DSM 6899 / JCM 31910 / BCRC 17059 / LMG 24140 / F1)).